The primary structure comprises 114 residues: T cell receptor alpha variable 10 (114 aa).

Residues 1 to 21 form the signal peptide; the sequence is MKKHLTTFLVILWLYFYRGNG. The region spanning 23-114 is the Ig-like domain; that stretch reads NQVEQSPQSL…DSASYICVVS (92 aa). N-linked (GlcNAc...) asparagine glycans are attached at residues Asn-39 and Asn-45. A disulfide bridge links Cys-44 with Cys-111.

In terms of assembly, alpha-beta TR is a heterodimer composed of an alpha and beta chain; disulfide-linked. The alpha-beta TR is associated with the transmembrane signaling CD3 coreceptor proteins to form the TR-CD3 (TcR or TCR). The assembly of alpha-beta TR heterodimers with CD3 occurs in the endoplasmic reticulum where a single alpha-beta TR heterodimer associates with one CD3D-CD3E heterodimer, one CD3G-CD3E heterodimer and one CD247 homodimer forming a stable octameric structure. CD3D-CD3E and CD3G-CD3E heterodimers preferentially associate with TR alpha and TR beta chains, respectively. The association of the CD247 homodimer is the last step of TcR assembly in the endoplasmic reticulum and is required for transport to the cell surface.

It is found in the cell membrane. Functionally, v region of the variable domain of T cell receptor (TR) alpha chain that participates in the antigen recognition. Alpha-beta T cell receptors are antigen specific receptors which are essential to the immune response and are present on the cell surface of T lymphocytes. Recognize peptide-major histocompatibility (MH) (pMH) complexes that are displayed by antigen presenting cells (APC), a prerequisite for efficient T cell adaptive immunity against pathogens. Binding of alpha-beta TR to pMH complex initiates TR-CD3 clustering on the cell surface and intracellular activation of LCK that phosphorylates the ITAM motifs of CD3G, CD3D, CD3E and CD247 enabling the recruitment of ZAP70. In turn ZAP70 phosphorylates LAT, which recruits numerous signaling molecules to form the LAT signalosome. The LAT signalosome propagates signal branching to three major signaling pathways, the calcium, the mitogen-activated protein kinase (MAPK) kinase and the nuclear factor NF-kappa-B (NF-kB) pathways, leading to the mobilization of transcription factors that are critical for gene expression and essential for T cell growth and differentiation. The T cell repertoire is generated in the thymus, by V-(D)-J rearrangement. This repertoire is then shaped by intrathymic selection events to generate a peripheral T cell pool of self-MH restricted, non-autoaggressive T cells. Post-thymic interaction of alpha-beta TR with the pMH complexes shapes TR structural and functional avidity. This chain is T cell receptor alpha variable 10, found in Homo sapiens (Human).